Consider the following 618-residue polypeptide: tRNA 5-methylaminomethyl-2-thiouridine biosynthesis bifunctional protein MnmC (618 aa).

The tRNA (mnm(5)s(2)U34)-methyltransferase stretch occupies residues 1-231; the sequence is MLQTYAPIDF…KRHMLSAVYE (231 aa). The FAD-dependent cmnm(5)s(2)U34 oxidoreductase stretch occupies residues 256 to 618; the sequence is IGAGIAGATT…KDIIRGHLNN (363 aa).

It in the N-terminal section; belongs to the methyltransferase superfamily. tRNA (mnm(5)s(2)U34)-methyltransferase family. The protein in the C-terminal section; belongs to the DAO family. FAD is required as a cofactor.

Its subcellular location is the cytoplasm. The catalysed reaction is 5-aminomethyl-2-thiouridine(34) in tRNA + S-adenosyl-L-methionine = 5-methylaminomethyl-2-thiouridine(34) in tRNA + S-adenosyl-L-homocysteine + H(+). Its function is as follows. Catalyzes the last two steps in the biosynthesis of 5-methylaminomethyl-2-thiouridine (mnm(5)s(2)U) at the wobble position (U34) in tRNA. Catalyzes the FAD-dependent demodification of cmnm(5)s(2)U34 to nm(5)s(2)U34, followed by the transfer of a methyl group from S-adenosyl-L-methionine to nm(5)s(2)U34, to form mnm(5)s(2)U34. This is tRNA 5-methylaminomethyl-2-thiouridine biosynthesis bifunctional protein MnmC from Dichelobacter nodosus (strain VCS1703A).